Here is a 189-residue protein sequence, read N- to C-terminus: HGPRTase-like protein (189 aa).

The protein belongs to the purine/pyrimidine phosphoribosyltransferase family. Archaeal HPRT subfamily.

May catalyze a purine salvage reaction, the substrate is unknown. The polypeptide is HGPRTase-like protein (Halorubrum lacusprofundi (strain ATCC 49239 / DSM 5036 / JCM 8891 / ACAM 34)).